Consider the following 660-residue polypeptide: Threonine--tRNA ligase (660 aa).

The 49-residue stretch at 1–49 (MPDSIVHVKKGQRFLDVIKDKNVVAVKIDSVLHDLRDVAERDVDAIPVS) folds into the TGS domain. The catalytic stretch occupies residues 225 to 554 (DHRRIIAEMD…LLEHYAGKLP (330 aa)). Residues C318, H369, and H531 each coordinate Zn(2+).

Belongs to the class-II aminoacyl-tRNA synthetase family. In terms of assembly, homodimer. The cofactor is Zn(2+).

Its subcellular location is the cytoplasm. The catalysed reaction is tRNA(Thr) + L-threonine + ATP = L-threonyl-tRNA(Thr) + AMP + diphosphate + H(+). Functionally, catalyzes the attachment of threonine to tRNA(Thr) in a two-step reaction: L-threonine is first activated by ATP to form Thr-AMP and then transferred to the acceptor end of tRNA(Thr). In Thermoplasma acidophilum (strain ATCC 25905 / DSM 1728 / JCM 9062 / NBRC 15155 / AMRC-C165), this protein is Threonine--tRNA ligase.